The chain runs to 239 residues: Ribulose-phosphate 3-epimerase (239 aa).

Serine 9 provides a ligand contact to substrate. The a divalent metal cation site is built by histidine 34, aspartate 36, and histidine 78. The active-site Proton acceptor is aspartate 36. Substrate contacts are provided by residues histidine 78, 154–157 (GFGG), 183–185 (DGG), and 205–207 (GTS). An a divalent metal cation-binding site is contributed by aspartate 183. Aspartate 183 (proton donor) is an active-site residue.

Belongs to the ribulose-phosphate 3-epimerase family. The cofactor is Co(2+). It depends on Fe(2+) as a cofactor. Mn(2+) serves as cofactor. Zn(2+) is required as a cofactor.

The enzyme catalyses D-ribulose 5-phosphate = D-xylulose 5-phosphate. Its pathway is carbohydrate degradation; pentose phosphate pathway; D-xylulose 5-phosphate from D-ribulose 5-phosphate (non-oxidative stage): step 1/1. Its function is as follows. Catalyzes the reversible epimerization of D-ribulose 5-phosphate to D-xylulose 5-phosphate. The chain is Ribulose-phosphate 3-epimerase (RPE1) from Eremothecium gossypii (strain ATCC 10895 / CBS 109.51 / FGSC 9923 / NRRL Y-1056) (Yeast).